The sequence spans 130 residues: Protein ApaG (130 aa).

Residues 3 to 127 (EHESCGVRIS…FSLDRPSDRL (125 aa)) form the ApaG domain.

This Maricaulis maris (strain MCS10) (Caulobacter maris) protein is Protein ApaG.